Here is a 77-residue protein sequence, read N- to C-terminus: Acyl carrier protein (77 aa).

Residues 3 to 77 form the Carrier domain; it reads QEIFEKVKKI…GKAVEHIESK (75 aa). O-(pantetheine 4'-phosphoryl)serine is present on S38.

The protein belongs to the acyl carrier protein (ACP) family. 4'-phosphopantetheine is transferred from CoA to a specific serine of apo-ACP by AcpS. This modification is essential for activity because fatty acids are bound in thioester linkage to the sulfhydryl of the prosthetic group.

The protein resides in the cytoplasm. Its pathway is lipid metabolism; fatty acid biosynthesis. In terms of biological role, carrier of the growing fatty acid chain in fatty acid biosynthesis. The chain is Acyl carrier protein from Synechocystis sp. (strain ATCC 27184 / PCC 6803 / Kazusa).